The primary structure comprises 714 residues: MTEIIDLDLVDDFIKKPMVKQQKNQSSKPRVKRRGQLTFDDFRNIKIVEEPVVLSHNSSIDESLDAATQNTKKREKYEGTCDEEMKTKEMEANMASKYSNIKTHSNDTNKVESISEHTTSNNRPLNTLNWSPNIPLRYSDFAKFMSDETVTESNWAPPLCTPLPYAGDVMKILSFIVKFKWVFSDDLLNLSFQDVEIGLELKVAGHSAKNIRICQDKMNLLFCSLLRLLFCSEKRADNQTHRNFTLKRFLSLKNPYGKLVGKLRSLIQEWGLPKEWRGNSDILSTLNFNGGGLLTMEPLDRIILLRCMIDWNCSYSALFHNEIQRLTHLKGDTGFNHQTFHASRFAMCGANNILDSCEVLCSLMSQKLENRKKRKPSDKGKLSKINSQMKFLKGVRKSLSEKVTTDRLRAAVKINEEWGEYFANEFTHTPIDDPTVDEIYKLRTSEFMIARIPRVGDFYLPPFWIGNECSSVNTSYSFNDMSTYLNYFVKFKEEGTKILPAKTAQNENKCQLKLIYRNTPACIRNLQFNDVHFAEVPHWFEVAGDSNSLSNFIEYLESLSSLTENDTDDTKKGIDNLIEFLKIFSIFINETIQRITAAPTGSTEGRHLRTSSQRRTTVHYSSDVNGDVSEESENEVDIDVSDDYDSEYLSEENTLTRKGEDRTDKSFGKRELHNGAKDCDRNCDDIEIFSEPVRQLQDNSREKRSLRRNARKGL.

Disordered regions lie at residues Ala598 to Asn674 and Arg694 to Leu714. Residues Thr610–Val624 show a composition bias toward polar residues. Positions Val628–Ser650 are enriched in acidic residues. Residues Thr654–Asn674 show a composition bias toward basic and acidic residues. Residues Arg704–Leu714 show a composition bias toward basic residues.

In terms of assembly, interacts with GAL11 and SIR2.

The protein localises to the cytoplasm. Its subcellular location is the nucleus. Functionally, involved in HMR and telomere silencing via the recruitment or stabilizing of the SIR (silent information regulators) complex. The polypeptide is Protein ESC8 (ESC8) (Saccharomyces cerevisiae (strain ATCC 204508 / S288c) (Baker's yeast)).